We begin with the raw amino-acid sequence, 217 residues long: Thymidylate kinase (217 aa).

11-18 (GLEGAGKS) is an ATP binding site.

It belongs to the thymidylate kinase family.

It catalyses the reaction dTMP + ATP = dTDP + ADP. Phosphorylation of dTMP to form dTDP in both de novo and salvage pathways of dTTP synthesis. This chain is Thymidylate kinase, found in Alkalilimnicola ehrlichii (strain ATCC BAA-1101 / DSM 17681 / MLHE-1).